The sequence spans 861 residues: Leucine--tRNA ligase (861 aa).

Residues 43-53 (PYPSGKLHMGH) carry the 'HIGH' region motif. A 'KMSKS' region motif is present at residues 588 to 592 (KMSKS). Residue lysine 591 coordinates ATP.

It belongs to the class-I aminoacyl-tRNA synthetase family.

The protein resides in the cytoplasm. It carries out the reaction tRNA(Leu) + L-leucine + ATP = L-leucyl-tRNA(Leu) + AMP + diphosphate. This Symbiobacterium thermophilum (strain DSM 24528 / JCM 14929 / IAM 14863 / T) protein is Leucine--tRNA ligase.